The primary structure comprises 855 residues: DNA mismatch repair protein MutS (855 aa).

617-624 (GPNMGGKS) lines the ATP pocket.

It belongs to the DNA mismatch repair MutS family.

Its function is as follows. This protein is involved in the repair of mismatches in DNA. It is possible that it carries out the mismatch recognition step. This protein has a weak ATPase activity. This is DNA mismatch repair protein MutS from Baumannia cicadellinicola subsp. Homalodisca coagulata.